The following is a 715-amino-acid chain: Integrator complex subunit 13 (715 aa).

Disordered regions lie at residues K572–I612 and A626–P659. Residues K581 to E591 carry the Nuclear localization signal (NLS) motif. The cleavage module binding motif (CMBM) stretch occupies residues G658–G703.

It belongs to the Integrator subunit 13 family. As to quaternary structure, component of the Integrator complex, composed of core subunits INTS1, INTS2, INTS3, INTS4, INTS5, INTS6, INTS7, INTS8, INTS9/RC74, INTS10, INTS11/CPSF3L, INTS12, INTS13, INTS14 and INTS15. The core complex associates with protein phosphatase 2A subunits PPP2CA and PPP2R1A, to form the Integrator-PP2A (INTAC) complex. INTS13 is part of the tail subcomplex, composed of INTS10, INTS13, INTS14 and INTS15.

The protein localises to the nucleus. The protein resides in the cytoplasm. Its function is as follows. Component of the integrator complex, a multiprotein complex that terminates RNA polymerase II (Pol II) transcription in the promoter-proximal region of genes. The integrator complex provides a quality checkpoint during transcription elongation by driving premature transcription termination of transcripts that are unfavorably configured for transcriptional elongation: the complex terminates transcription by (1) catalyzing dephosphorylation of the C-terminal domain (CTD) of Pol II subunit POLR2A/RPB1 and SUPT5H/SPT5, (2) degrading the exiting nascent RNA transcript via endonuclease activity and (3) promoting the release of Pol II from bound DNA. The integrator complex is also involved in terminating the synthesis of non-coding Pol II transcripts, such as enhancer RNAs (eRNAs), small nuclear RNAs (snRNAs), telomerase RNAs and long non-coding RNAs (lncRNAs). Within the integrator complex, INTS13 is part of the integrator tail module and acts as a platform for the recruitment of transcription factors at promoters. Plays a role in gastrulation and early embryogenesis. The polypeptide is Integrator complex subunit 13 (Xenopus laevis (African clawed frog)).